Here is a 128-residue protein sequence, read N- to C-terminus: Fluoride-specific ion channel FluC (128 aa).

The next 4 helical transmembrane spans lie at 4–24 (LILAIIVGCGGFIGAALRYLI), 37–57 (PYGTLIVNIVGAIIIGFIMDI), 63–83 (LISGHTKLFLTTGMMGGLTTF), and 99–119 (ILMGCTNAALNLGLSLVGVII). Residues Gly78 and Thr81 each contribute to the Na(+) site.

This sequence belongs to the fluoride channel Fluc/FEX (TC 1.A.43) family.

It localises to the cell membrane. It carries out the reaction fluoride(in) = fluoride(out). With respect to regulation, na(+) is not transported, but it plays an essential structural role and its presence is essential for fluoride channel function. Its function is as follows. Fluoride-specific ion channel. Important for reducing fluoride concentration in the cell, thus reducing its toxicity. The polypeptide is Fluoride-specific ion channel FluC (Clostridium novyi (strain NT)).